Reading from the N-terminus, the 210-residue chain is MRVPAAVTGGCGCGVDGGGGCCRGGGKLADWEEGKDDEMKSVVVKGWTRMAQVVPLHDNASAEDDDDDEEDDDEDDDDDDDEDDEEEAAPPYVMAVDDSSVDRAVITALLRRSKYRVTAVDSGKRALEILGSEPNVSMIITDYWMPEMTGYDLLKKIKESSELKQIPVVIMSSENVPTRISRCLEEGAEDFLLKPVRPADISRITSRMLQ.

The segment at 53 to 92 (VVPLHDNASAEDDDDDEEDDDEDDDDDDDEDDEEEAAPPY) is disordered. Residues 61-88 (SAEDDDDDEEDDDEDDDDDDDEDDEEEA) are compositionally biased toward acidic residues. A Response regulatory domain is found at 92-205 (YVMAVDDSSV…VRPADISRIT (114 aa)). Aspartate 142 bears the 4-aspartylphosphate mark.

It belongs to the ARR family. Type-A subfamily. Post-translationally, two-component system major event consists of a His-to-Asp phosphorelay between a sensor histidine kinase (HK) and a response regulator (RR). In plants, the His-to-Asp phosphorelay involves an additional intermediate named Histidine-containing phosphotransfer protein (HPt). This multistep phosphorelay consists of a His-Asp-His-Asp sequential transfer of a phosphate group between first a His and an Asp of the HK protein, followed by the transfer to a conserved His of the HPt protein and finally the transfer to an Asp in the receiver domain of the RR protein.

Functionally, functions as a response regulator involved in His-to-Asp phosphorelay signal transduction system. Phosphorylation of the Asp residue in the receiver domain activates the ability of the protein to promote the transcription of target genes. Type-A response regulators seem to act as negative regulators of the cytokinin signaling. This Oryza sativa subsp. japonica (Rice) protein is Two-component response regulator ORR7.